Reading from the N-terminus, the 388-residue chain is Succinate--CoA ligase [ADP-forming] subunit beta (388 aa).

Residues 9 to 244 enclose the ATP-grasp domain; the sequence is KQLFARYGLP…HSQEDEREAH (236 aa). ATP is bound by residues lysine 46, 53–55, glutamate 99, threonine 102, and glutamate 107; that span reads GRG. Residues asparagine 199 and aspartate 213 each contribute to the Mg(2+) site. Residues asparagine 264 and 321 to 323 contribute to the substrate site; that span reads GIV.

This sequence belongs to the succinate/malate CoA ligase beta subunit family. In terms of assembly, heterotetramer of two alpha and two beta subunits. Requires Mg(2+) as cofactor.

It catalyses the reaction succinate + ATP + CoA = succinyl-CoA + ADP + phosphate. The enzyme catalyses GTP + succinate + CoA = succinyl-CoA + GDP + phosphate. Its pathway is carbohydrate metabolism; tricarboxylic acid cycle; succinate from succinyl-CoA (ligase route): step 1/1. Its function is as follows. Succinyl-CoA synthetase functions in the citric acid cycle (TCA), coupling the hydrolysis of succinyl-CoA to the synthesis of either ATP or GTP and thus represents the only step of substrate-level phosphorylation in the TCA. The beta subunit provides nucleotide specificity of the enzyme and binds the substrate succinate, while the binding sites for coenzyme A and phosphate are found in the alpha subunit. The protein is Succinate--CoA ligase [ADP-forming] subunit beta of Sodalis glossinidius (strain morsitans).